The following is a 470-amino-acid chain: UTP--glucose-1-phosphate uridylyltransferase 1 (470 aa).

The residue at position 2 (alanine 2) is an N-acetylalanine. UTP is bound by residues 86 to 89 (LNGG), lysine 100, glutamine 163, and glycine 192. 88–89 (GG) provides a ligand contact to substrate. Substrate contacts are provided by residues histidine 193 and 221 to 223 (NSD). UTP is bound by residues aspartate 223 and lysine 361.

It belongs to the UDPGP type 1 family. Expressed in roots, rosette leaves, cauline leaves, stems, flowers and siliques.

It is found in the cytoplasm. It carries out the reaction alpha-D-glucose 1-phosphate + UTP + H(+) = UDP-alpha-D-glucose + diphosphate. Converts glucose 1-phosphate to UDP-glucose, which is the major glycosyl donor for polysaccharides. Acts redundantly with UGP2 and is essential for the synthesis of sucrose, starch and cell wall, and callose deposition. Involved in the regulation of the programmed cell death (PCD) induced by the fungal toxin fumonisin B1 (FB1). This Arabidopsis thaliana (Mouse-ear cress) protein is UTP--glucose-1-phosphate uridylyltransferase 1.